Consider the following 213-residue polypeptide: Large ribosomal subunit protein uL3 (213 aa).

The protein belongs to the universal ribosomal protein uL3 family. In terms of assembly, part of the 50S ribosomal subunit. Forms a cluster with proteins L14 and L19.

Its function is as follows. One of the primary rRNA binding proteins, it binds directly near the 3'-end of the 23S rRNA, where it nucleates assembly of the 50S subunit. The sequence is that of Large ribosomal subunit protein uL3 from Bifidobacterium adolescentis (strain ATCC 15703 / DSM 20083 / NCTC 11814 / E194a).